We begin with the raw amino-acid sequence, 342 residues long: Probable dual-specificity RNA methyltransferase RlmN (342 aa).

The Proton acceptor role is filled by Glu91. The Radical SAM core domain occupies 97 to 326 (YRFGNTACVS…CTVRRELGSD (230 aa)). Cys104 and Cys331 form a disulfide bridge. [4Fe-4S] cluster-binding residues include Cys111, Cys115, and Cys118. S-adenosyl-L-methionine contacts are provided by residues 157-158 (GE), Ser189, 212-214 (SLH), and Asn288. The S-methylcysteine intermediate role is filled by Cys331.

This sequence belongs to the radical SAM superfamily. RlmN family. [4Fe-4S] cluster is required as a cofactor.

The protein localises to the cytoplasm. It carries out the reaction adenosine(2503) in 23S rRNA + 2 reduced [2Fe-2S]-[ferredoxin] + 2 S-adenosyl-L-methionine = 2-methyladenosine(2503) in 23S rRNA + 5'-deoxyadenosine + L-methionine + 2 oxidized [2Fe-2S]-[ferredoxin] + S-adenosyl-L-homocysteine. The enzyme catalyses adenosine(37) in tRNA + 2 reduced [2Fe-2S]-[ferredoxin] + 2 S-adenosyl-L-methionine = 2-methyladenosine(37) in tRNA + 5'-deoxyadenosine + L-methionine + 2 oxidized [2Fe-2S]-[ferredoxin] + S-adenosyl-L-homocysteine. Its function is as follows. Specifically methylates position 2 of adenine 2503 in 23S rRNA and position 2 of adenine 37 in tRNAs. The protein is Probable dual-specificity RNA methyltransferase RlmN of Thermoanaerobacter pseudethanolicus (strain ATCC 33223 / 39E) (Clostridium thermohydrosulfuricum).